We begin with the raw amino-acid sequence, 194 residues long: MFIISFEGIDGSGKTTISKIIYEKLLIEIGSNKKIILTSEPFSQEIIKLIEEIGWKDPISLALLFTADRAYHLNLLFKQNPEIIIMDRYIDSTIAYQSSLGIDENWIRNLNKYFPEPDLTILLDLKPETAIARIKNKVDKFNFDEKISTLSKVREKYLELAKRNNKIRIVNAEKSIDEIVEETWSIVYSFLNHF.

8-15 (GIDGSGKT) contacts ATP.

This sequence belongs to the thymidylate kinase family.

The enzyme catalyses dTMP + ATP = dTDP + ADP. In Sulfolobus acidocaldarius (strain ATCC 33909 / DSM 639 / JCM 8929 / NBRC 15157 / NCIMB 11770), this protein is Probable thymidylate kinase.